Reading from the N-terminus, the 446-residue chain is GTPase Der (446 aa).

2 consecutive EngA-type G domains span residues 3–167 (PVLA…AFDE) and 180–353 (IRLA…ASAT). GTP is bound by residues 9 to 16 (GRPNVGKS), 56 to 60 (DTGGF), 119 to 122 (NKAE), 186 to 193 (GRPNVGKS), 233 to 237 (DTAGL), and 298 to 301 (NKWD). The 85-residue stretch at 354–438 (KKLATPVLTR…PMRIEMKSSR (85 aa)) folds into the KH-like domain.

Belongs to the TRAFAC class TrmE-Era-EngA-EngB-Septin-like GTPase superfamily. EngA (Der) GTPase family. In terms of assembly, associates with the 50S ribosomal subunit.

In terms of biological role, GTPase that plays an essential role in the late steps of ribosome biogenesis. This Methylibium petroleiphilum (strain ATCC BAA-1232 / LMG 22953 / PM1) protein is GTPase Der.